The chain runs to 174 residues: Ribosome maturation factor RimP (174 aa).

The protein belongs to the RimP family.

It localises to the cytoplasm. Required for maturation of 30S ribosomal subunits. The chain is Ribosome maturation factor RimP from Acinetobacter baumannii (strain AB307-0294).